The sequence spans 472 residues: 2-amino-4-ketopentanoate thiolase beta subunit (472 aa).

Lysine 102 is subject to N6-(pyridoxal phosphate)lysine. Residues asparagine 128 and 238 to 242 (AGGGN) each bind pyridoxal 5'-phosphate.

It belongs to the threonine synthase family. Heterodimer with OrtA. Requires pyridoxal 5'-phosphate as cofactor.

It catalyses the reaction D-alanine + acetyl-CoA = (2R)-2-amino-4-oxopentanoate + CoA. Its function is as follows. Involved in the ornithine fermentation pathway. Catalyzes the thiolytic cleavage of 2-amino-4-ketopentanoate (AKP) with coenzyme A (CoA) to form acetyl-CoA and alanine. It is strictly specific for AKP. The chain is 2-amino-4-ketopentanoate thiolase beta subunit from Unknown prokaryotic organism.